The primary structure comprises 75 residues: Tautomerase PptA (75 aa).

Residue Pro2 is the Proton acceptor; via imino nitrogen of the active site.

It belongs to the 4-oxalocrotonate tautomerase family. PptA subfamily. As to quaternary structure, homodimer.

It is found in the cytoplasm. This is Tautomerase PptA from Klebsiella pneumoniae (strain 342).